The following is a 71-amino-acid chain: UPF0346 protein SSU05_1322 (71 aa).

The protein belongs to the UPF0346 family.

In Streptococcus suis (strain 05ZYH33), this protein is UPF0346 protein SSU05_1322.